Here is a 170-residue protein sequence, read N- to C-terminus: Peptide deformylase 2 (170 aa).

Fe cation contacts are provided by Cys-94 and His-136. Glu-137 is an active-site residue. His-140 lines the Fe cation pocket.

Belongs to the polypeptide deformylase family. The cofactor is Fe(2+).

It catalyses the reaction N-terminal N-formyl-L-methionyl-[peptide] + H2O = N-terminal L-methionyl-[peptide] + formate. Functionally, removes the formyl group from the N-terminal Met of newly synthesized proteins. Requires at least a dipeptide for an efficient rate of reaction. N-terminal L-methionine is a prerequisite for activity but the enzyme has broad specificity at other positions. This is Peptide deformylase 2 from Xanthomonas axonopodis pv. citri (strain 306).